The chain runs to 990 residues: MAVLKLADQPPLVQAIFSGDPEEIRMLIYKTEDVNALDAEKRTPLHVASFLGDADIIELLILSGARVNAKDNMWLTPLHRAVASRSEEAVQVLIKHSADVNARDKNWQTPLHVAAANKALKCAEIIIPMLSSVNVSDRGGRTALHHAALNGHVEMVNLLLAKGANINAFDKKDRRALHWAAYMGHLEVVALLINHGAEVTCKDKKGYTPLHAAASNGQINIVKHLLNLGVEIDEMNIYGNTALHIACYNGQDSVVNELIDYGANVNQPNNNGFTPLHFAAASTHGALCLELLVNNGADVNIQSKDGKSPLHMTAVHGRFTRSQTLIQNGGEIDCVDKDGNTPLHVAARYGHELLINTLITSGADTAKCGIHNMFPLHLAALNAHSDCCRKLLSSGFEIDTPDSFGRTCLHAAAAGGNVECIKLLQSSGADFNKKDKRGRTPLHYAAANCHFHCIETLVTTGANINETDDWGRTPLHYAAASDMDRKKNILGNSHENAEELERTSEMKEKEAALCLEFLLQNDANPSIQDKEGYNTVHYAAAYGHRQCLELLLEKNSNMFEESDSSATKSPLHLAAYNGHHQALEVLLQSLVDLDIKDEKGRTALDLAAFKGHAECVEALISQGASVTVKDNVTKRTPLHASVINGHTPCLRLLLEVADNPDVTDAKGQTPLMLAVAYGHIDAVSLLLEKEASVDAADLLGCTALHRGIMTGHEECVQMLLEKEVSILCKDARGRTPLHFAAARGHATWLSELLQIALSEEDCSLKDNQGYTPLHWACYNGHENCIEVLLEQKFFRKFYGNSFSPLHCAVINDHENCASMLIGAIDASIVNCKDDKGRTPLHAAAFADHVECLQLLLSHSAQVNAVDHAGKTALMMAAQNGHVGAVDFLVNIAKADLTLRDKDSNTSLHLASSKGHEKCALLILDKIQEQSLINAKNNSLQTPLHIAARNGLKMVVEELLAKGACVLAVDENVSRSNGPRTSSATDVQKEE.

ANK repeat units lie at residues 7 to 36 (ADQP…DVNA), 40 to 69 (EKRT…RVNA), 73 to 102 (MWLT…DVNA), 106 to 135 (NWQT…SVNV), 139 to 168 (GGRT…NINA), 172 to 201 (KDRR…EVTC), 205 to 234 (KGYT…EIDE), 238 to 267 (YGNT…NVNQ), 271 to 301 (NGFT…DVNI), 305 to 334 (DGKS…EIDC), 338 to 367 (DGNT…DTAK), 371 to 400 (HNMF…EIDT), 404 to 433 (FGRT…DFNK), 437 to 466 (RGRT…NINE), 470 to 499 (WGRT…NAEE), 531 to 560 (EGYN…NMFE), 566 to 595 (ATKS…DLDI), 599 to 628 (KGRT…SVTV), 633 to 662 (TKRT…NPDV), 666 to 695 (KGQT…SVDA), 699 to 728 (LGCT…SILC), 732 to 761 (RGRT…SEED), 768 to 797 (QGYT…FRKF), 800 to 829 (NSFS…ASIV), 835 to 864 (KGRT…QVNA), 868 to 898 (AGKT…DLTL), 902 to 931 (DSNT…EQSL), and 938 to 967 (SLQT…CVLA).

As to quaternary structure, protein phosphatase 6 (PP6) holoenzyme is proposed to be a heterotrimeric complex formed by the catalytic subunit, a SAPS domain-containing subunit (PP6R) and an ankyrin repeat-domain containing regulatory subunit (ARS).

In terms of biological role, putative regulatory subunit of protein phosphatase 6 (PP6) that may be involved in the recognition of phosphoprotein substrates. This chain is Serine/threonine-protein phosphatase 6 regulatory ankyrin repeat subunit B (ANKRD44), found in Gallus gallus (Chicken).